We begin with the raw amino-acid sequence, 275 residues long: Large ribosomal subunit protein uL2 (275 aa).

Residues M225–K275 are disordered. Basic residues predominate over residues T258–K275.

The protein belongs to the universal ribosomal protein uL2 family. As to quaternary structure, part of the 50S ribosomal subunit. Forms a bridge to the 30S subunit in the 70S ribosome.

One of the primary rRNA binding proteins. Required for association of the 30S and 50S subunits to form the 70S ribosome, for tRNA binding and peptide bond formation. It has been suggested to have peptidyltransferase activity; this is somewhat controversial. Makes several contacts with the 16S rRNA in the 70S ribosome. In Desulforudis audaxviator (strain MP104C), this protein is Large ribosomal subunit protein uL2.